An 811-amino-acid polypeptide reads, in one-letter code: Protein VAC14 homolog (811 aa).

HEAT repeat units lie at residues aspartate 81 to glycine 119, phenylalanine 122 to glutamine 160, isoleucine 240 to lysine 278, glutamine 334 to lysine 372, leucine 375 to lysine 412, serine 431 to glycine 469, and isoleucine 472 to serine 510. The segment covering threonine 775–serine 785 has biased composition (low complexity). Residues threonine 775–glutamine 811 form a disordered region.

It belongs to the VAC14 family. As to quaternary structure, component of the PI(3,5)P2 regulatory complex, composed of ATG18, FIG4, FAB1, VAC14 and VAC7. VAC14 nucleates the assembly of the complex and serves as a scaffold.

It is found in the cytoplasm. It localises to the vacuole membrane. In terms of biological role, the PI(3,5)P2 regulatory complex regulates both the synthesis and turnover of phosphatidylinositol 3,5-bisphosphate (PtdIns(3,5)P2). Regulates the synthesis of PtdIns(3,5)P2 by positive activation of FAB1 and by controlling FIG4 localization. In Schizosaccharomyces pombe (strain 972 / ATCC 24843) (Fission yeast), this protein is Protein VAC14 homolog.